A 1131-amino-acid polypeptide reads, in one-letter code: MADDNETVVSAPICTAAWLYILPKEQKLIEILTTLSLMEKRKSVVISPLLLNLTVENDFFPTVKTPIINYGGTVITKITSFMPVCFFFHGTDVFLKEAEDHGNLDKLCKQTREKFNLQEFVVNGNRKSVDIGKICESVGRNADDVLCHIVVGNGFKELLFAGLLIPCVEEQIQVQVGECLAIKIPLYSATLFESEETLCIDTCTEFIQENGFYAPQISEVLFYLIFTSWGMTLRFNNTLELIKAGLKQFIQDTEQTVKLAPNKTYHGIPGQKLSPIEKDHLMLVDAVITELTFSYTAEYLDSIYENNQIMNFSEWPIIKSAETHEEKIVELKKLRLHLSSHVAALVFAANSILYSNKLAYISNTKQAFNSAITQETLLRSIQFCNSLSSLNEDFYNDARKLIKCNSSPCKEDKFSAFHLAYACATCPQILSHIIWNLNRMSIYNTNCGNSEIYNHIVNCSSNLCEFCEGKCCHSCIGTALIRINSRLPQISKTTKKEPIVMTMFSRFYADVDVLGSFGKKGVNESKDPMKEAQTTPSLDRFKFLGMIHDYCKKNNLIDAITGEDNLNFKSQNDFVNMINDLIQCIEEAVSKCISEMRKTQTSREQIENCLQSFNIDTTPLSLAFSPFFVFTYYKVILIVLQNLALIIGTGYVVDRPCTGNLISKWLMQQYQSLYGAFYNSHFKKGFLNMKTVKIASNVDMEQYIDFNLFKSGKYAKTSIQAKLCRLSMQCLKDFRVKNRPFNKPNKNTQNNPFFKKVKQKKNPLSGCLSFLLFKYHERLFPNLKISCLEFWQRILLNNMPKTIDIGNVEDMRSFIKFTFRVTNSYDEIDLLDIQPECLLSFIEYYFHNKLLSVLGYRDYLTSLHALTSKLVPQNPMLFPVFLKEHPTFSSVQEYVMHVKKLVGNGLKEPMTASLTKEPNFGSIFTGRSIITFGLMIEKFVSVASRDYFHFGQLGWIAGSGVDRNLNPPSSGLQDFRFMRQKFVIATKLCDIIVKKVKREAIVYDVEVIRGKVLNIIESLSNSVNPELLILAEVMKDRDSKPTMDDMLFYVDGREPLAKSVMNKIQHLTDLNVHDFSLSTLLSVFEEQVEDSAAIYDFSELLVEGNEQGFGILKCEETEHENEEPSLKKARL.

Positions 790–791 (FW) match the Required for filament formation motif. Positions 1112–1131 (LKCEETEHENEEPSLKKARL) are required for nuclear localization.

It belongs to the herpesviridae major DNA-binding protein family. As to quaternary structure, homooligomers. Forms double-helical filaments necessary for the formation of replication compartments within the host nucleus. Interacts with the origin-binding protein. Interacts with the helicase primase complex; this interaction stimulates primer synthesis activity of the helicase-primase complex. Interacts with the DNA polymerase. Interacts with the alkaline exonuclease; this interaction increases its nuclease processivity.

The protein resides in the host nucleus. Functionally, single-stranded DNA-binding protein required for DNA replication. Its function is as follows. Plays several crucial roles in viral infection. Participates in the opening of the viral DNA origin to initiate replication by interacting with the origin-binding protein. May disrupt loops, hairpins and other secondary structures present on ssDNA to reduce and eliminate pausing of viral DNA polymerase at specific sites during elongation. Promotes viral DNA recombination by performing strand-transfer, characterized by the ability to transfer a DNA strand from a linear duplex to a complementary single-stranded DNA circle. Can also catalyze the renaturation of complementary single strands. Additionally, reorganizes the host cell nucleus, leading to the formation of prereplicative sites and replication compartments. This process is driven by the protein which can form double-helical filaments in the absence of DNA. The sequence is that of Major DNA-binding protein from Human herpesvirus 7 (strain JI) (HHV-7).